Here is a 202-residue protein sequence, read N- to C-terminus: Putative pre-16S rRNA nuclease (202 aa).

Disordered regions lie at residues 1 to 27 (MSGSGSRPGDSRPGDSRPGDSRPGVRI) and 170 to 202 (GCAAPAAGPDGVVRAPRDGPRAPDGVVPPSDER). The span at 9 to 20 (GDSRPGDSRPGD) shows a compositional bias: basic and acidic residues.

This sequence belongs to the YqgF nuclease family.

It localises to the cytoplasm. Its function is as follows. Could be a nuclease involved in processing of the 5'-end of pre-16S rRNA. In Frankia casuarinae (strain DSM 45818 / CECT 9043 / HFP020203 / CcI3), this protein is Putative pre-16S rRNA nuclease.